The chain runs to 203 residues: Short chain dehydrogenase/reductase dpmpH (203 aa).

Aspartate 23, tyrosine 77, and lysine 81 together coordinate NADP(+). Residue tyrosine 77 is the Proton acceptor of the active site. Lysine 81 (lowers pKa of active site Tyr) is an active-site residue.

This sequence belongs to the short-chain dehydrogenases/reductases (SDR) family.

It functions in the pathway secondary metabolite biosynthesis; terpenoid biosynthesis. Short chain dehydrogenase/reductase; part of the gene cluster that mediates the biosynthesis of diterpenoid pyrones. The first step of the pathway is the synthesis of the alpha-pyrone moiety by the polyketide synthase dpmpA via condensation of one acetyl-CoA starter unit with 3 malonyl-CoA units and 2 methylations. The alpha-pyrone is then combined with geranylgeranyl pyrophosphate (GGPP) formed by the GGPP synthase dpmpD through the action of the prenyltransferase dpmpC to yield a linear alpha-pyrone diterpenoid. Subsequent steps in the diterpenoid pyrone biosynthetic pathway involve the decalin core formation, which is initiated by the epoxidation of the C10-C11 olefin by the FAD-dependent oxidoreductase dpmpE, and is followed by a cyclization cascade catalyzed by the terpene cyclase dpmpB. The short chain dehydrogenase/reductase dpmpG then oxidizes the 8S hydroxy group to a ketone and the short chain dehydrogenase/reductase dpmpH reduces the ketone to the 8R hydroxy group to yield higginsianin B. Higginsianin B is further methylated by the methyltransferase dpmpI to produce the intermediate named FDDP B. The cytochrome P450 monooxygenase dpmpJ then oxidizes the C-26 methyl to primary alcohol, producing the final diterpenoid pyrone with a C-26 primary alcohol on the gamma-pyrone moiety named FDDP C. This Macrophomina phaseolina (strain MS6) (Charcoal rot fungus) protein is Short chain dehydrogenase/reductase dpmpH.